We begin with the raw amino-acid sequence, 293 residues long: Transcriptional regulator ICP22 homolog (293 aa).

Disordered stretches follow at residues 1–49 (MPHG…QRID) and 175–293 (RFLE…SARR). Residues 21-31 (TPSTSPLIPSL) are compositionally biased toward low complexity. A compositionally biased stretch (acidic residues) spans 190–210 (EECDVSGDESPSEEEEEDEAS). Residues 272–281 (AAKKRRKRQP) are compositionally biased toward basic residues. Basic and acidic residues predominate over residues 282–293 (PKGERPTKSARR).

Belongs to the herpesviridae ICP22 family.

This chain is Transcriptional regulator ICP22 homolog (IR4), found in Equus caballus (Horse).